Here is a 294-residue protein sequence, read N- to C-terminus: Syntaxin-19 (294 aa).

The 63-residue stretch at 209 to 271 folds into the t-SNARE coiled-coil homology domain; the sequence is LSEIEQRHKE…NNTKEKFGLA (63 aa).

It belongs to the syntaxin family. As to quaternary structure, interacts with EGFR.

The protein resides in the cell membrane. It is found in the cytoplasm. Functionally, plays a role in endosomal trafficking of the epidermal growth factor receptor (EGFR). This chain is Syntaxin-19 (STX19), found in Pongo abelii (Sumatran orangutan).